We begin with the raw amino-acid sequence, 747 residues long: Polyribonucleotide nucleotidyltransferase (747 aa).

Positions 487 and 493 each coordinate Mg(2+). The KH domain maps to 554–613 (PSTTTIKIDKDKIRDVIGPGGKVIKEICETSDAKIDISDDGTVSVYASDRDKLKVALDKI). An S1 motif domain is found at 623–691 (GEIFNGTVMK…NKGKAKLTIK (69 aa)). The tract at residues 691–747 (KNADKDKSSNNPKQKNNVNNSKENSEPERRDSSKKRAWNEDNNSDTTEVITERKYFN) is disordered. Positions 699 to 712 (SNNPKQKNNVNNSK) are enriched in low complexity. Over residues 730–739 (EDNNSDTTEV) the composition is skewed to polar residues.

This sequence belongs to the polyribonucleotide nucleotidyltransferase family. Requires Mg(2+) as cofactor.

The protein localises to the cytoplasm. The catalysed reaction is RNA(n+1) + phosphate = RNA(n) + a ribonucleoside 5'-diphosphate. Its function is as follows. Involved in mRNA degradation. Catalyzes the phosphorolysis of single-stranded polyribonucleotides processively in the 3'- to 5'-direction. This chain is Polyribonucleotide nucleotidyltransferase, found in Rickettsia akari (strain Hartford).